The sequence spans 423 residues: tRNA(Ile)-lysidine synthase (423 aa).

An ATP-binding site is contributed by S29–S34.

The protein belongs to the tRNA(Ile)-lysidine synthase family.

Its subcellular location is the cytoplasm. It carries out the reaction cytidine(34) in tRNA(Ile2) + L-lysine + ATP = lysidine(34) in tRNA(Ile2) + AMP + diphosphate + H(+). Its function is as follows. Ligates lysine onto the cytidine present at position 34 of the AUA codon-specific tRNA(Ile) that contains the anticodon CAU, in an ATP-dependent manner. Cytidine is converted to lysidine, thus changing the amino acid specificity of the tRNA from methionine to isoleucine. This Lactococcus lactis subsp. lactis (strain IL1403) (Streptococcus lactis) protein is tRNA(Ile)-lysidine synthase.